Consider the following 210-residue polypeptide: Quaternary-amine-specific corrinoid protein (210 aa).

A B12-binding N-terminal domain is found at 1 to 90 (MADWKNLTQA…VLGSGDTAVA (90 aa)). Positions 90 to 210 (AGTILIGTAH…GVKICQAWVG (121 aa)) constitute a B12-binding domain. His103 provides a ligand contact to methylcob(III)alamin.

The protein belongs to the methylamine corrinoid protein family. As to quaternary structure, the proline betaine:THF methyl transfer system is composed of two methyltransferases, MtpB and MtqA, and the corrinoid protein MtqC. The L-carnitine:THF methyl transfer system is composed of two methyltransferases, MtcB and MtqA, and the corrinoid protein MtqC.

In terms of biological role, involved in the degradation of the quaternary amines L-proline betaine and L-carnitine. Component of a corrinoid-dependent methyltransferase system that transfers a methyl group from L-proline betaine or L-carnitine to tetrahydrofolate (THF), forming methyl-THF, a key intermediate in the Wood-Ljungdahl acetogenesis pathway. Acts as a methyl group carrier between MtpB or MtcB, and MtqA. A methyl group from L-proline betaine or L-carnitine is first transferred to the corrinoid prosthetic group of MtqC by MtpB or MtcB, respectively, and then transferred from MtqC to THF by MtqA. The sequence is that of Quaternary-amine-specific corrinoid protein from Eubacterium limosum.